We begin with the raw amino-acid sequence, 552 residues long: Urocanate hydratase (552 aa).

NAD(+) contacts are provided by residues 49-50, Q127, 173-175, D193, 239-240, 260-264, 270-271, and Y319; these read GG, GMG, NA, QTSAH, and YI. C407 is an active-site residue. G489 contributes to the NAD(+) binding site.

This sequence belongs to the urocanase family. NAD(+) is required as a cofactor.

The protein resides in the cytoplasm. The enzyme catalyses 4-imidazolone-5-propanoate = trans-urocanate + H2O. Its pathway is amino-acid degradation; L-histidine degradation into L-glutamate; N-formimidoyl-L-glutamate from L-histidine: step 2/3. Its function is as follows. Catalyzes the conversion of urocanate to 4-imidazolone-5-propionate. The polypeptide is Urocanate hydratase (Bacillus cereus (strain ATCC 10987 / NRS 248)).